The chain runs to 432 residues: Pachytene checkpoint protein 2 homolog (432 aa).

179–186 (GPPGTGKT) serves as a coordination point for ATP.

The protein belongs to the AAA ATPase family. PCH2 subfamily.

Its function is as follows. Plays a key role in chromosome recombination and chromosome structure development during meiosis. Required at early steps in meiotic recombination that leads to non-crossovers pathways. Also needed for efficient completion of homologous synapsis by influencing crossover distribution along the chromosomes affecting both crossovers and non-crossovers pathways. This chain is Pachytene checkpoint protein 2 homolog (trip13), found in Xenopus tropicalis (Western clawed frog).